Reading from the N-terminus, the 308-residue chain is Methionyl-tRNA formyltransferase (308 aa).

110 to 113 (SLLP) contacts (6S)-5,6,7,8-tetrahydrofolate.

This sequence belongs to the Fmt family.

The catalysed reaction is L-methionyl-tRNA(fMet) + (6R)-10-formyltetrahydrofolate = N-formyl-L-methionyl-tRNA(fMet) + (6S)-5,6,7,8-tetrahydrofolate + H(+). In terms of biological role, attaches a formyl group to the free amino group of methionyl-tRNA(fMet). The formyl group appears to play a dual role in the initiator identity of N-formylmethionyl-tRNA by promoting its recognition by IF2 and preventing the misappropriation of this tRNA by the elongation apparatus. This chain is Methionyl-tRNA formyltransferase, found in Mycobacterium sp. (strain KMS).